The sequence spans 1051 residues: Ubiquitin-activating enzyme E1 2 (1051 aa).

The segment covering 1 to 32 (MLPRKREIVAGEVEDLQKKTRAGEGEATREEG) has biased composition (basic and acidic residues). Positions 1–42 (MLPRKREIVAGEVEDLQKKTRAGEGEATREEGDAAMAGRGNE) are disordered. Repeat copies occupy residues 56–194 (GRET…GSVF) and 453–605 (GSTL…QMVI). The 2 approximate repeats stretch occupies residues 56 to 605 (GRETMKPLFG…GAKCNTQMVI (550 aa)). ATP is bound by residues alanine 472, aspartate 498, arginine 509, lysine 522, and 570-571 (DN). Residue cysteine 626 is the Glycyl thioester intermediate of the active site.

This sequence belongs to the ubiquitin-activating E1 family. In terms of assembly, monomer.

It catalyses the reaction ATP + ubiquitin + [E1 ubiquitin-activating enzyme]-L-cysteine = AMP + diphosphate + S-ubiquitinyl-[E1 ubiquitin-activating enzyme]-L-cysteine.. It participates in protein modification; protein ubiquitination. Its function is as follows. Activates ubiquitin by first adenylating its C-terminal glycine residue with ATP, and thereafter linking this residue to the side chain of a cysteine residue in E1, yielding a ubiquitin-E1 thioester and free AMP. The sequence is that of Ubiquitin-activating enzyme E1 2 (UBA2) from Triticum aestivum (Wheat).